The chain runs to 132 residues: ATP synthase epsilon chain, chloroplastic (132 aa).

Belongs to the ATPase epsilon chain family. In terms of assembly, F-type ATPases have 2 components, CF(1) - the catalytic core - and CF(0) - the membrane proton channel. CF(1) has five subunits: alpha(3), beta(3), gamma(1), delta(1), epsilon(1). CF(0) has three main subunits: a, b and c.

Its subcellular location is the plastid. The protein resides in the chloroplast thylakoid membrane. In terms of biological role, produces ATP from ADP in the presence of a proton gradient across the membrane. The polypeptide is ATP synthase epsilon chain, chloroplastic (Coffea arabica (Arabian coffee)).